We begin with the raw amino-acid sequence, 225 residues long: MSRETASSEITPELLLRAYACGIFPMAESVDDPTLFWVEPKMRGVVPLESFRIPSRLARTVRSDSFTVTVDTAFDAVINGCAAPQPGRNNTWINHRIRELYIGLHELGHCHSVEVWRDNELAGGLYGVRLGRAFFGESMFHVVRDASKVALVHLVARLIAGGFVLLDTQFVTDHLRGFGAIEIPRRRYRALLDVALEGRADFGALPLDRPVPGAEALKAIADRSS.

Belongs to the L/F-transferase family.

It is found in the cytoplasm. The catalysed reaction is N-terminal L-lysyl-[protein] + L-leucyl-tRNA(Leu) = N-terminal L-leucyl-L-lysyl-[protein] + tRNA(Leu) + H(+). It catalyses the reaction N-terminal L-arginyl-[protein] + L-leucyl-tRNA(Leu) = N-terminal L-leucyl-L-arginyl-[protein] + tRNA(Leu) + H(+). It carries out the reaction L-phenylalanyl-tRNA(Phe) + an N-terminal L-alpha-aminoacyl-[protein] = an N-terminal L-phenylalanyl-L-alpha-aminoacyl-[protein] + tRNA(Phe). Functionally, functions in the N-end rule pathway of protein degradation where it conjugates Leu, Phe and, less efficiently, Met from aminoacyl-tRNAs to the N-termini of proteins containing an N-terminal arginine or lysine. This Nitrobacter winogradskyi (strain ATCC 25391 / DSM 10237 / CIP 104748 / NCIMB 11846 / Nb-255) protein is Leucyl/phenylalanyl-tRNA--protein transferase.